The sequence spans 389 residues: Chorismate synthase (389 aa).

The NADP(+) site is built by Arg41 and Arg47. FMN is bound by residues 129-131 (RSS), 247-248 (NA), Gly291, 306-310 (KPIST), and Arg332.

It belongs to the chorismate synthase family. Homotetramer. FMNH2 is required as a cofactor.

It carries out the reaction 5-O-(1-carboxyvinyl)-3-phosphoshikimate = chorismate + phosphate. It functions in the pathway metabolic intermediate biosynthesis; chorismate biosynthesis; chorismate from D-erythrose 4-phosphate and phosphoenolpyruvate: step 7/7. Its function is as follows. Catalyzes the anti-1,4-elimination of the C-3 phosphate and the C-6 proR hydrogen from 5-enolpyruvylshikimate-3-phosphate (EPSP) to yield chorismate, which is the branch point compound that serves as the starting substrate for the three terminal pathways of aromatic amino acid biosynthesis. This reaction introduces a second double bond into the aromatic ring system. This is Chorismate synthase from Rubrobacter xylanophilus (strain DSM 9941 / JCM 11954 / NBRC 16129 / PRD-1).